A 376-amino-acid polypeptide reads, in one-letter code: MKILADENMPYVQQLFGDLGTIETVNGRELTPEQVKDADVLLVRSVTKVDQALLAENNRLKFVGSATIGTDHIDLDYLASHNIPFSNAPGCNATAVGEFAFIAMLELAQRFNSPLKGKVVGIVGAGNTGTAVVKCLEAYGIEVLLNDPLLEQSGDPRDFVSLDTLIEKCDVISLHVPITKTGEHKTWYLFDEQRLNSLAENTWLVNCCRGEVIDNRALIKFKQQRDDVKVVLDVWEGEPNPMPELVPYVEFCTPHIAGYSLEGKARGTYILYQKLAEVLQISADKQMESLLPALWSERVLVQEISDERALLQLARFVYDLRDDDELFRKQFLNNQGFDHMRKNHTHRREFSALKVGNTGQTNVNWLSNLGFSGVEL.

Serine 45 and threonine 67 together coordinate substrate. An NAD(+)-binding site is contributed by aspartate 147. Arginine 209 is a catalytic residue. Aspartate 233 is an NAD(+) binding site. Glutamate 238 is a catalytic residue. Residue histidine 255 is the Proton donor of the active site. Glycine 258 contacts NAD(+). Tyrosine 259 provides a ligand contact to substrate.

The protein belongs to the D-isomer specific 2-hydroxyacid dehydrogenase family. PdxB subfamily. As to quaternary structure, homodimer.

The protein resides in the cytoplasm. It carries out the reaction 4-phospho-D-erythronate + NAD(+) = (R)-3-hydroxy-2-oxo-4-phosphooxybutanoate + NADH + H(+). Its pathway is cofactor biosynthesis; pyridoxine 5'-phosphate biosynthesis; pyridoxine 5'-phosphate from D-erythrose 4-phosphate: step 2/5. Catalyzes the oxidation of erythronate-4-phosphate to 3-hydroxy-2-oxo-4-phosphonooxybutanoate. This chain is Erythronate-4-phosphate dehydrogenase, found in Shewanella halifaxensis (strain HAW-EB4).